The sequence spans 576 residues: Proteinaceous RNase P 3 (576 aa).

Basic and acidic residues predominate over residues 65–75 (NRRSRHDDESP). A disordered region spans residues 65–88 (NRRSRHDDESPKNPNKKKKGNRNP). PPR repeat units lie at residues 88–123 (PEKSLLINLHSCSKRKDLSAALALYDAAITSSDIRL), 129–166 (QSLLYLCSAFISDPSLQTVAIDRGFQIFDRMVSSGISP), 167–201 (NESSVTAVARLAAAKGDGDYAFKLVKDLVAVGGVS), and 204–238 (RLRTYAPALLCFCDTLEAEKGYEVEDHMDASGIVL). The PRORP domain maps to 335–570 (SSAGKCLSCD…KEESLRSWMC (236 aa)). The Zn(2+) site is built by Cys340 and Cys343. Residues Asp402, Asp480, Asp481, and Asp499 each contribute to the Mn(2+) site. Residues His553 and Cys570 each coordinate Zn(2+).

It belongs to the PPR family. P subfamily. Mg(2+) serves as cofactor. It depends on Mn(2+) as a cofactor.

The protein localises to the nucleus. The enzyme catalyses Endonucleolytic cleavage of RNA, removing 5'-extranucleotides from tRNA precursor.. Functionally, endonuclease RNase P responsible for the 5' maturation of tRNA precursors. Also involved in the maturation of mRNA and small nucleolar RNA (snoRNA). In Arabidopsis thaliana (Mouse-ear cress), this protein is Proteinaceous RNase P 3 (PRORP3).